We begin with the raw amino-acid sequence, 134 residues long: Large ribosomal subunit protein uL18 (134 aa).

Belongs to the universal ribosomal protein uL18 family. As to quaternary structure, part of the 50S ribosomal subunit; part of the 5S rRNA/L5/L18/L25 subcomplex. Contacts the 5S and 23S rRNAs.

This is one of the proteins that bind and probably mediate the attachment of the 5S RNA into the large ribosomal subunit, where it forms part of the central protuberance. In Corynebacterium glutamicum (strain ATCC 13032 / DSM 20300 / JCM 1318 / BCRC 11384 / CCUG 27702 / LMG 3730 / NBRC 12168 / NCIMB 10025 / NRRL B-2784 / 534), this protein is Large ribosomal subunit protein uL18.